Here is an 838-residue protein sequence, read N- to C-terminus: Xyloglucanase (838 aa).

The signal sequence occupies residues 1–19; it reads MKVSRVLALVLGAVIPAHA. Catalysis depends on aspartate 53, which acts as the Nucleophile. Residues asparagine 232 and asparagine 436 are each glycosylated (N-linked (GlcNAc...) asparagine). Residue aspartate 469 is the Proton donor of the active site. Residues 750-801 are disordered; that stretch reads GTGGTSSSTKQSSSSTSSASSSTTLRSSVVSTTRASTVTSSRTSSAAGPTGS. Low complexity predominate over residues 754–797; it reads TSSSTKQSSSSTSSASSSTTLRSSVVSTTRASTVTSSRTSSAAG. Residues 802 to 838 form the CBM1 domain; it reads GVAGHYAQCGGIGWTGPTQCVAPYVCQKQNDYYYQCV.

The protein belongs to the glycosyl hydrolase 74 family.

It carries out the reaction Hydrolysis of (1-&gt;4)-D-glucosidic linkages in xyloglucans so as to successively remove oligosaccharides from the newly-formed chain end after endo-initiation on a polymer molecule.. Functionally, hydrolyzes the glucosidic bonds of unbranched Glc residues in tamarind seed xyloglucan, producing XXXG, XLXG, XXLG and XLLG. Has a low activity against beta-glucan and carboxymethylcellulose. Not active against Avicel, laminarin, xylan, galactomannan, linear and branched arabinans, galactan, polygalacturonic acid, starch, beta-D-Glcp, beta-D-cellobiose, beta-D-Galp, beta-D-Xylp, alpha-D-Xylp, alpha-L-Araf and alpha-L-Arap. This chain is Xyloglucanase, found in Hypocrea jecorina (strain QM6a) (Trichoderma reesei).